The following is a 348-amino-acid chain: Protein RecA (348 aa).

Residue 67–74 (GPESSGKT) participates in ATP binding.

The protein belongs to the RecA family.

The protein localises to the cytoplasm. Functionally, can catalyze the hydrolysis of ATP in the presence of single-stranded DNA, the ATP-dependent uptake of single-stranded DNA by duplex DNA, and the ATP-dependent hybridization of homologous single-stranded DNAs. It interacts with LexA causing its activation and leading to its autocatalytic cleavage. The protein is Protein RecA of Salinispora arenicola (strain CNS-205).